Reading from the N-terminus, the 371-residue chain is tRNA-specific 2-thiouridylase MnmA (371 aa).

ATP is bound by residues glycine 13–serine 20 and methionine 39. Residues asparagine 99–aspartate 101 are interaction with target base in tRNA. Residue cysteine 104 is the Nucleophile of the active site. Cysteine 104 and cysteine 200 form a disulfide bridge. Glycine 128 lines the ATP pocket. The interval lysine 150–glutamine 152 is interaction with tRNA. Cysteine 200 functions as the Cysteine persulfide intermediate in the catalytic mechanism. The interval arginine 308–tyrosine 309 is interaction with tRNA.

The protein belongs to the MnmA/TRMU family.

It localises to the cytoplasm. The catalysed reaction is S-sulfanyl-L-cysteinyl-[protein] + uridine(34) in tRNA + AH2 + ATP = 2-thiouridine(34) in tRNA + L-cysteinyl-[protein] + A + AMP + diphosphate + H(+). In terms of biological role, catalyzes the 2-thiolation of uridine at the wobble position (U34) of tRNA, leading to the formation of s(2)U34. This is tRNA-specific 2-thiouridylase MnmA from Listeria welshimeri serovar 6b (strain ATCC 35897 / DSM 20650 / CCUG 15529 / CIP 8149 / NCTC 11857 / SLCC 5334 / V8).